Here is a 104-residue protein sequence, read N- to C-terminus: L-rhamnose mutarotase (104 aa).

Y18 contributes to the substrate binding site. The active-site Proton donor is the H22. Substrate-binding positions include Y41 and W76–W77.

This sequence belongs to the rhamnose mutarotase family. Homodimer.

The protein localises to the cytoplasm. The catalysed reaction is alpha-L-rhamnose = beta-L-rhamnose. It participates in carbohydrate metabolism; L-rhamnose metabolism. In terms of biological role, involved in the anomeric conversion of L-rhamnose. This Lactiplantibacillus plantarum (strain ATCC BAA-793 / NCIMB 8826 / WCFS1) (Lactobacillus plantarum) protein is L-rhamnose mutarotase.